The sequence spans 262 residues: Zinc import ATP-binding protein ZnuC (262 aa).

Positions 4 to 220 constitute an ABC transporter domain; sequence LNLSGVRLSH…PEYLALFGPR (217 aa). An ATP-binding site is contributed by 36-43; it reads GPNGAGKS. The tract at residues 238-262 is disordered; that stretch reads ADGSVLPLAEGGGEPHTHGPGCRHG.

This sequence belongs to the ABC transporter superfamily. Zinc importer (TC 3.A.1.15.5) family. The complex is composed of two ATP-binding proteins (ZnuC), two transmembrane proteins (ZnuB) and a solute-binding protein (ZnuA).

The protein resides in the cell inner membrane. It carries out the reaction Zn(2+)(out) + ATP(in) + H2O(in) = Zn(2+)(in) + ADP(in) + phosphate(in) + H(+)(in). In terms of biological role, part of the ABC transporter complex ZnuABC involved in zinc import. Responsible for energy coupling to the transport system. The protein is Zinc import ATP-binding protein ZnuC of Paramagnetospirillum magneticum (strain ATCC 700264 / AMB-1) (Magnetospirillum magneticum).